Here is a 195-residue protein sequence, read N- to C-terminus: GTP-dependent dephospho-CoA kinase (195 aa).

5 residues coordinate GTP: aspartate 49, valine 50, aspartate 68, glutamate 127, and aspartate 150.

The protein belongs to the GTP-dependent DPCK family.

It carries out the reaction 3'-dephospho-CoA + GTP = GDP + CoA + H(+). It participates in cofactor biosynthesis; coenzyme A biosynthesis. In terms of biological role, catalyzes the GTP-dependent phosphorylation of the 3'-hydroxyl group of dephosphocoenzyme A to form coenzyme A (CoA). The chain is GTP-dependent dephospho-CoA kinase from Methanosarcina barkeri (strain Fusaro / DSM 804).